The following is a 500-amino-acid chain: Neuronal pentraxin receptor (500 aa).

At 1–2 (MK) the chain is on the cytoplasmic side. The chain crosses the membrane as a helical; Signal-anchor for type II membrane protein span at residues 3-23 (FLAVLLAAGMLAFLGAVICII). Over 24-500 (ASVPLAASPA…FDVCKGRAKA (477 aa)) the chain is Extracellular. Residue Asn42 is glycosylated (N-linked (GlcNAc...) asparagine). Positions 42 to 63 (NASVASGAAASPGPQRSLSALH) are enriched in low complexity. Disordered regions lie at residues 42–81 (NASVASGAAASPGPQRSLSALHGAGGSAGPPALPGAPAAS) and 162–183 (ESGLPRGLQGAGPRRDTMADGP). Asn216 carries an N-linked (GlcNAc...) asparagine glycan. The region spanning 292-494 (DAFKISIPIR…GATKAAFDVC (203 aa)) is the Pentraxin (PTX) domain. The cysteines at positions 322 and 383 are disulfide-linked. The Ca(2+) site is built by Asn347, Glu425, Gln426, Asp427, and Gln437. Asn463 is a glycosylation site (N-linked (GlcNAc...) asparagine).

In terms of assembly, heteropentamer with NPTX1 and/or NPTX2. Also binds taipoxin-associated calcium-binding protein 49 (TCBP49/RCN2). Interacts with KLHL2. It depends on Ca(2+) as a cofactor. Ubiquitinated by a cullin-RING-based BCR (BTB-CUL3-RBX1) E3 ubiquitin-protein ligase complex containing KLHL2.

It is found in the membrane. Functionally, may be involved in mediating uptake of synaptic material during synapse remodeling or in mediating the synaptic clustering of AMPA glutamate receptors at a subset of excitatory synapses. This chain is Neuronal pentraxin receptor (NPTXR), found in Homo sapiens (Human).